A 249-amino-acid polypeptide reads, in one-letter code: Tetrahydromethanopterin S-methyltransferase subunit A (249 aa).

The Cytoplasmic portion of the chain corresponds to 1 to 227 (MADKKEVIQN…KISSGYYAGK (227 aa)). H84 contacts 5-hydroxybenzimidazolylcob(I)amide. The helical transmembrane segment at 228-248 (IEGIVIGFILTLVFLIIIIQG) threads the bilayer. A topological domain (extracellular) is located at residue L249.

It belongs to the MtrA family. As to quaternary structure, the complex is composed of 8 subunits; MtrA, MtrB, MtrC, MtrD, MtrE, MtrF, MtrG and MtrH. The cofactor is 5-hydroxybenzimidazolylcob(I)amide.

Its subcellular location is the cell membrane. The catalysed reaction is 5-methyl-5,6,7,8-tetrahydromethanopterin + coenzyme M + 2 Na(+)(in) = 5,6,7,8-tetrahydromethanopterin + methyl-coenzyme M + 2 Na(+)(out). It participates in one-carbon metabolism; methanogenesis from CO(2); methyl-coenzyme M from 5,10-methylene-5,6,7,8-tetrahydromethanopterin: step 2/2. Its function is as follows. Part of a complex that catalyzes the formation of methyl-coenzyme M and tetrahydromethanopterin from coenzyme M and methyl-tetrahydromethanopterin. This is an energy-conserving, sodium-ion translocating step. This Methanosphaera stadtmanae (strain ATCC 43021 / DSM 3091 / JCM 11832 / MCB-3) protein is Tetrahydromethanopterin S-methyltransferase subunit A.